A 66-amino-acid polypeptide reads, in one-letter code: DNA-directed RNA polymerase subunit Rpo10 (66 aa).

The Zn(2+) site is built by C7, C10, C44, and C45.

The protein belongs to the archaeal Rpo10/eukaryotic RPB10 RNA polymerase subunit family. Part of the RNA polymerase complex. The cofactor is Zn(2+).

Its subcellular location is the cytoplasm. It carries out the reaction RNA(n) + a ribonucleoside 5'-triphosphate = RNA(n+1) + diphosphate. DNA-dependent RNA polymerase (RNAP) catalyzes the transcription of DNA into RNA using the four ribonucleoside triphosphates as substrates. The chain is DNA-directed RNA polymerase subunit Rpo10 from Hyperthermus butylicus (strain DSM 5456 / JCM 9403 / PLM1-5).